Here is a 31-residue protein sequence, read N- to C-terminus: Cyclotide hyen-J (31 aa).

The segment at residues 1-31 (GSVPCGESCVWIPCITSIAGCSCSNKVCYMD) is a cross-link (cyclopeptide (Gly-Asp)). 3 cysteine pairs are disulfide-bonded: Cys5-Cys21, Cys9-Cys23, and Cys14-Cys28.

Post-translationally, this is a cyclic peptide. Detected in seeds (at protein level).

Probably participates in a plant defense mechanism. In Pigea enneasperma (Spade flower), this protein is Cyclotide hyen-J.